Here is a 117-residue protein sequence, read N- to C-terminus: UPF0342 protein LGAS_1451 (117 aa).

Belongs to the UPF0342 family.

The protein is UPF0342 protein LGAS_1451 of Lactobacillus gasseri (strain ATCC 33323 / DSM 20243 / BCRC 14619 / CIP 102991 / JCM 1131 / KCTC 3163 / NCIMB 11718 / NCTC 13722 / AM63).